Reading from the N-terminus, the 111-residue chain is Large ribosomal subunit protein uL24 (111 aa).

The tract at residues 85–111 (NTNDPRRKDIINRKASRQKEEQGGKAQ) is disordered. Over residues 88–111 (DPRRKDIINRKASRQKEEQGGKAQ) the composition is skewed to basic and acidic residues.

It belongs to the universal ribosomal protein uL24 family. In terms of assembly, part of the 50S ribosomal subunit.

Functionally, one of two assembly initiator proteins, it binds directly to the 5'-end of the 23S rRNA, where it nucleates assembly of the 50S subunit. In terms of biological role, located at the polypeptide exit tunnel on the outside of the subunit. The chain is Large ribosomal subunit protein uL24 from Metallosphaera sedula (strain ATCC 51363 / DSM 5348 / JCM 9185 / NBRC 15509 / TH2).